The following is a 76-amino-acid chain: ATP synthase subunit c (76 aa).

Helical transmembrane passes span 7 to 27 (VATA…IGII) and 50 to 70 (FIGI…AFLI).

Belongs to the ATPase C chain family. In terms of assembly, F-type ATPases have 2 components, F(1) - the catalytic core - and F(0) - the membrane proton channel. F(1) has five subunits: alpha(3), beta(3), gamma(1), delta(1), epsilon(1). F(0) has four main subunits: a(1), b(1), b'(1) and c(10-14). The alpha and beta chains form an alternating ring which encloses part of the gamma chain. F(1) is attached to F(0) by a central stalk formed by the gamma and epsilon chains, while a peripheral stalk is formed by the delta, b and b' chains.

It is found in the cell membrane. Its function is as follows. F(1)F(0) ATP synthase produces ATP from ADP in the presence of a proton or sodium gradient. F-type ATPases consist of two structural domains, F(1) containing the extramembraneous catalytic core and F(0) containing the membrane proton channel, linked together by a central stalk and a peripheral stalk. During catalysis, ATP synthesis in the catalytic domain of F(1) is coupled via a rotary mechanism of the central stalk subunits to proton translocation. In terms of biological role, key component of the F(0) channel; it plays a direct role in translocation across the membrane. A homomeric c-ring of between 10-14 subunits forms the central stalk rotor element with the F(1) delta and epsilon subunits. The sequence is that of ATP synthase subunit c from Chloroflexus aurantiacus (strain ATCC 29366 / DSM 635 / J-10-fl).